The chain runs to 344 residues: L-rhamnose-proton symporter (344 aa).

The next 10 helical transmembrane spans lie at 4-24 (AITM…CFYA), 38-58 (WSVG…ALLL), 68-88 (FNLS…IGNI), 101-121 (MGIG…TPII), 137-157 (TLLG…AGQL), 175-195 (LLLA…MNAA), 214-234 (LPSY…FCFI), 259-279 (ILLS…YAWG), 290-310 (MSWM…GLVL), and 321-341 (VAVL…VGLG).

This sequence belongs to the L-rhamnose transporter (TC 2.A.7.6) family.

It localises to the cell inner membrane. It catalyses the reaction L-rhamnopyranose(in) + H(+)(in) = L-rhamnopyranose(out) + H(+)(out). Functionally, uptake of L-rhamnose across the cytoplasmic membrane with the concomitant transport of protons into the cell (symport system). The chain is L-rhamnose-proton symporter from Salmonella gallinarum (strain 287/91 / NCTC 13346).